Consider the following 643-residue polypeptide: Threonine--tRNA ligase (643 aa).

Residues Met1–Thr61 enclose the TGS domain. The interval Asp243–Pro534 is catalytic. Zn(2+)-binding residues include Cys334, His385, and His511.

This sequence belongs to the class-II aminoacyl-tRNA synthetase family. Homodimer. Zn(2+) is required as a cofactor.

The protein localises to the cytoplasm. The enzyme catalyses tRNA(Thr) + L-threonine + ATP = L-threonyl-tRNA(Thr) + AMP + diphosphate + H(+). In terms of biological role, catalyzes the attachment of threonine to tRNA(Thr) in a two-step reaction: L-threonine is first activated by ATP to form Thr-AMP and then transferred to the acceptor end of tRNA(Thr). Also edits incorrectly charged L-seryl-tRNA(Thr). This chain is Threonine--tRNA ligase, found in Glaesserella parasuis serovar 5 (strain SH0165) (Haemophilus parasuis).